The sequence spans 82 residues: Small ribosomal subunit protein bS16 (82 aa).

Belongs to the bacterial ribosomal protein bS16 family.

The sequence is that of Small ribosomal subunit protein bS16 from Aeromonas hydrophila subsp. hydrophila (strain ATCC 7966 / DSM 30187 / BCRC 13018 / CCUG 14551 / JCM 1027 / KCTC 2358 / NCIMB 9240 / NCTC 8049).